Reading from the N-terminus, the 41-residue chain is Large ribosomal subunit protein bL36 (41 aa).

Belongs to the bacterial ribosomal protein bL36 family.

The polypeptide is Large ribosomal subunit protein bL36 (Edwardsiella ictaluri (strain 93-146)).